Here is a 255-residue protein sequence, read N- to C-terminus: 4-hydroxy-tetrahydrodipicolinate reductase (255 aa).

Residues 9–14 (GFKGKM), 89–91 (GTT), and 115–118 (APNF) contribute to the NAD(+) site. Histidine 145 serves as the catalytic Proton donor/acceptor. Histidine 146 lines the (S)-2,3,4,5-tetrahydrodipicolinate pocket. Lysine 149 acts as the Proton donor in catalysis. Position 155–156 (155–156 (GT)) interacts with (S)-2,3,4,5-tetrahydrodipicolinate.

The protein belongs to the DapB family.

The protein resides in the cytoplasm. It catalyses the reaction (S)-2,3,4,5-tetrahydrodipicolinate + NAD(+) + H2O = (2S,4S)-4-hydroxy-2,3,4,5-tetrahydrodipicolinate + NADH + H(+). It carries out the reaction (S)-2,3,4,5-tetrahydrodipicolinate + NADP(+) + H2O = (2S,4S)-4-hydroxy-2,3,4,5-tetrahydrodipicolinate + NADPH + H(+). The protein operates within amino-acid biosynthesis; L-lysine biosynthesis via DAP pathway; (S)-tetrahydrodipicolinate from L-aspartate: step 4/4. Its function is as follows. Catalyzes the conversion of 4-hydroxy-tetrahydrodipicolinate (HTPA) to tetrahydrodipicolinate. The polypeptide is 4-hydroxy-tetrahydrodipicolinate reductase (Streptococcus gordonii (strain Challis / ATCC 35105 / BCRC 15272 / CH1 / DL1 / V288)).